Here is a 124-residue protein sequence, read N- to C-terminus: Large ribosomal subunit protein bL12 (124 aa).

It belongs to the bacterial ribosomal protein bL12 family. Homodimer. Part of the ribosomal stalk of the 50S ribosomal subunit. Forms a multimeric L10(L12)X complex, where L10 forms an elongated spine to which 2 to 4 L12 dimers bind in a sequential fashion. Binds GTP-bound translation factors.

Forms part of the ribosomal stalk which helps the ribosome interact with GTP-bound translation factors. Is thus essential for accurate translation. In Phytoplasma australiense, this protein is Large ribosomal subunit protein bL12.